The sequence spans 260 residues: NADH-ubiquinone oxidoreductase chain 6 (260 aa).

The next 6 membrane-spanning stretches (helical) occupy residues 2–22 (LTNY…FMII), 30–50 (SILY…ILGV), 52–72 (FIAI…FLFV), 101–121 (FLFQ…FGLF), 142–162 (VPSG…NLGI), and 211–231 (FFIF…SIIL).

The protein belongs to the complex I subunit 6 family.

Its subcellular location is the mitochondrion membrane. The catalysed reaction is a ubiquinone + NADH + 5 H(+)(in) = a ubiquinol + NAD(+) + 4 H(+)(out). Core subunit of the mitochondrial membrane respiratory chain NADH dehydrogenase (Complex I) that is believed to belong to the minimal assembly required for catalysis. Complex I functions in the transfer of electrons from NADH to the respiratory chain. The immediate electron acceptor for the enzyme is believed to be ubiquinone. In Acanthamoeba castellanii (Amoeba), this protein is NADH-ubiquinone oxidoreductase chain 6 (ND6).